The sequence spans 786 residues: Signal transducer and activator of transcription 5B (786 aa).

Tyr-90 bears the Phosphotyrosine mark. Ser-128 carries the post-translational modification Phosphoserine. Residues 589 to 686 (WNDGAILGFV…EVYSKYYTPV (98 aa)) enclose the SH2 domain. 2 positions are modified to phosphotyrosine: Tyr-682 and Tyr-699.

The protein belongs to the transcription factor STAT family. As to quaternary structure, upon activation, forms a homodimer or a heterodimer with a related family member. Binds NR3C1. Interacts with NCOA1. Interacts with NMI. Interacts with SOCS7. Interacts (via SH2 domain) with INSR. Interacts with CPEB3; this inhibits STAT5B-mediated transcriptional activation. Tyrosine phosphorylated in response to signaling via activated KIT, resulting in translocation to the nucleus. Tyrosine phosphorylated in response to signaling via activated FLT3; wild-type FLT3 results in much weaker phosphorylation than constitutively activated mutant FLT3. Alternatively, can be phosphorylated by JAK2. Phosphorylation at Tyr-699 by PTK6 or HCK leads to an increase of its transcriptional activity.

The protein localises to the cytoplasm. The protein resides in the nucleus. In terms of biological role, carries out a dual function: signal transduction and activation of transcription. Mediates cellular responses to the cytokine KITLG/SCF and other growth factors. Binds to the GAS element and activates PRL-induced transcription. Positively regulates hematopoietic/erythroid differentiation. This Rattus norvegicus (Rat) protein is Signal transducer and activator of transcription 5B (Stat5b).